The primary structure comprises 188 residues: uncharacterized protein (188 aa).

It localises to the plastid. The protein resides in the cyanelle. This is an uncharacterized protein from Cyanophora paradoxa.